The primary structure comprises 165 residues: PTS system glucose-specific EIIA component (165 aa).

The PTS EIIA type-1 domain occupies Asp34–Asn138. His71 and His86 together coordinate Zn(2+). The Tele-phosphohistidine intermediate; for EIIA activity role is filled by His86. His86 carries the post-translational modification Phosphohistidine; by HPr.

Heterodimer with glycerol kinase (glpk). Requires Zn(2+) as cofactor.

The protein localises to the cytoplasm. Its function is as follows. The phosphoenolpyruvate-dependent sugar phosphotransferase system (sugar PTS), a major carbohydrate active transport system, catalyzes the phosphorylation of incoming sugar substrates concomitantly with their translocation across the cell membrane. The enzyme II complex composed of PtsG and Crr is involved in glucose transport. The polypeptide is PTS system glucose-specific EIIA component (crr) (Oceanobacillus iheyensis (strain DSM 14371 / CIP 107618 / JCM 11309 / KCTC 3954 / HTE831)).